A 122-amino-acid polypeptide reads, in one-letter code: Neutral phospholipase A2 agkistrodotoxin (122 aa).

7 cysteine pairs are disulfide-bonded: C26-C115, C28-C44, C43-C95, C49-C122, C50-C88, C57-C81, and C75-C86. Residues Y27, G29, and G31 each coordinate Ca(2+). The active site involves H47. Ca(2+) is bound at residue D48. The active site involves D89.

Ca(2+) is required as a cofactor. Expressed by the venom gland.

The protein resides in the secreted. The catalysed reaction is a 1,2-diacyl-sn-glycero-3-phosphocholine + H2O = a 1-acyl-sn-glycero-3-phosphocholine + a fatty acid + H(+). Functionally, snake venom phospholipase A2 (PLA2) that inhibits neuromuscular transmission by blocking acetylcholine release from the nerve termini. PLA2 catalyzes the calcium-dependent hydrolysis of the 2-acyl groups in 3-sn-phosphoglycerides. This chain is Neutral phospholipase A2 agkistrodotoxin, found in Gloydius halys (Chinese water mocassin).